A 42-amino-acid polypeptide reads, in one-letter code: Photosystem I reaction center subunit IX (42 aa).

Residues 7–27 traverse the membrane as a helical segment; it reads YLSTAPVLATLWFGFLAGLLI.

Belongs to the PsaJ family.

The protein localises to the plastid. Its subcellular location is the chloroplast thylakoid membrane. Functionally, may help in the organization of the PsaE and PsaF subunits. The sequence is that of Photosystem I reaction center subunit IX from Marchantia polymorpha (Common liverwort).